The chain runs to 114 residues: Cell division protein FtsB (114 aa).

The Cytoplasmic segment spans residues Met-1 to Lys-3. The chain crosses the membrane as a helical span at residues Leu-4–Val-21. The Periplasmic portion of the chain corresponds to Gly-22–His-114. Residues Arg-31–Gly-62 are a coiled coil.

It belongs to the FtsB family. As to quaternary structure, part of a complex composed of FtsB, FtsL and FtsQ.

The protein resides in the cell inner membrane. In terms of biological role, essential cell division protein. May link together the upstream cell division proteins, which are predominantly cytoplasmic, with the downstream cell division proteins, which are predominantly periplasmic. The chain is Cell division protein FtsB from Edwardsiella ictaluri (strain 93-146).